Reading from the N-terminus, the 185-residue chain is Kunitz-type serine protease inhibitor DrTI (185 aa).

Cystine bridges form between Cys44–Cys89 and Cys139–Cys147.

The protein belongs to the protease inhibitor I3 (leguminous Kunitz-type inhibitor) family.

The protein localises to the secreted. Inhibits bovine trypsin and human plasma kallikrein. This is Kunitz-type serine protease inhibitor DrTI from Delonix regia (Royal poinciana).